The following is a 639-amino-acid chain: RNA polymerase II elongation factor ELL2 (639 aa).

Disordered regions lie at residues 175 to 203 (DTVPERKRSTPMNPANTIRKMHSGNSVSQ), 291 to 326 (LNPSQNASTSRSESPLCSSKDAASSPQKRPLDSDFI), 378 to 416 (PSTHLPVSNPPQTVNSNSNSPSTPEGLGTQDLPVDSFSQ), and 439 to 513 (PSSA…EGCT). The span at 291-317 (LNPSQNASTSRSESPLCSSKDAASSPQ) shows a compositional bias: polar residues. The segment covering 378–401 (PSTHLPVSNPPQTVNSNSNSPSTP) has biased composition (low complexity). Residues 457-469 (SHKKSKKKSKKHK) are compositionally biased toward basic residues. The span at 470–479 (EKDQIKKLDI) shows a compositional bias: basic and acidic residues. Residues 480 to 490 (ETMEEKEEDLQ) show a composition bias toward acidic residues. A phosphoserine mark is found at Ser-501 and Ser-579. The OCEL domain maps to 525–635 (PDYLIKYIAI…LIGEFDQQQA (111 aa)).

This sequence belongs to the ELL/occludin family. Component of the super elongation complex (SEC), at least composed of EAF1, EAF2, CDK9, MLLT3/AF9, AFF (AFF1 or AFF4), the P-TEFb complex and ELL (ELL, ELL2 or ELL3). Component of the little elongation complex (LEC), at least composed of ELL (ELL, ELL2 or ELL3), ZC3H8, ICE1 and ICE2. Interacts with AFF4; the interaction is direct and leads to stabilize ELL2 and prevent ELL2 ubiquitination. Interacts with EAF1 and EAF2. Post-translationally, ubiquitinated by SIAH1, leading to its degradation by the proteasome. Interaction with AFF4 stabilizes ELL2 and prevents ELL2 ubiquitination.

It localises to the nucleus. In terms of biological role, elongation factor component of the super elongation complex (SEC), a complex required to increase the catalytic rate of RNA polymerase II transcription by suppressing transient pausing by the polymerase at multiple sites along the DNA. Component of the little elongation complex (LEC), a complex required to regulate small nuclear RNA (snRNA) gene transcription by RNA polymerase II and III. Plays a role in immunoglobulin secretion in plasma cells: directs efficient alternative mRNA processing, influencing both proximal poly(A) site choice and exon skipping, as well as immunoglobulin heavy chain (IgH) alternative processing. Probably acts by regulating histone modifications accompanying transition from membrane-specific to secretory IgH mRNA expression. The polypeptide is RNA polymerase II elongation factor ELL2 (Ell2) (Mus musculus (Mouse)).